The following is a 351-amino-acid chain: Pleckstrin (351 aa).

The 98-residue stretch at 4–101 (KRIREGYLVK…WVRDTKKAIK (98 aa)) folds into the PH 1 domain. Lysine 64 carries the N6-acetyllysine modification. A phosphoserine mark is found at serine 113 and serine 117. In terms of domain architecture, DEP spans 136–221 (IEKGIKELNL…NPDAFYYFPD (86 aa)). One can recognise a PH 2 domain in the interval 244 to 348 (VIIKQGCLLK…WIKAIQVASR (105 aa)).

Its function is as follows. Major protein kinase C substrate of platelets. The protein is Pleckstrin (PLEK) of Canis lupus familiaris (Dog).